Consider the following 237-residue polypeptide: Peptidase E (237 aa).

Catalysis depends on charge relay system residues Ser-122, Asp-137, and His-159.

It belongs to the peptidase S51 family.

It is found in the cytoplasm. It carries out the reaction Dipeptidase E catalyzes the hydrolysis of dipeptides Asp-|-Xaa. It does not act on peptides with N-terminal Glu, Asn or Gln, nor does it cleave isoaspartyl peptides.. In terms of biological role, hydrolyzes dipeptides containing N-terminal aspartate residues. May play a role in allowing the cell to use peptide aspartate to spare carbon otherwise required for the synthesis of the aspartate family of amino acids. The sequence is that of Peptidase E from Shewanella baltica (strain OS155 / ATCC BAA-1091).